We begin with the raw amino-acid sequence, 325 residues long: Aspartate carbamoyltransferase catalytic subunit (325 aa).

Positions 64 and 65 each coordinate carbamoyl phosphate. Residue Lys92 participates in L-aspartate binding. 3 residues coordinate carbamoyl phosphate: Arg114, His142, and Gln145. L-aspartate contacts are provided by Arg176 and Arg230. 2 residues coordinate carbamoyl phosphate: Gly271 and Pro272.

Belongs to the aspartate/ornithine carbamoyltransferase superfamily. ATCase family. In terms of assembly, heterododecamer (2C3:3R2) of six catalytic PyrB chains organized as two trimers (C3), and six regulatory PyrI chains organized as three dimers (R2).

The enzyme catalyses carbamoyl phosphate + L-aspartate = N-carbamoyl-L-aspartate + phosphate + H(+). The protein operates within pyrimidine metabolism; UMP biosynthesis via de novo pathway; (S)-dihydroorotate from bicarbonate: step 2/3. Functionally, catalyzes the condensation of carbamoyl phosphate and aspartate to form carbamoyl aspartate and inorganic phosphate, the committed step in the de novo pyrimidine nucleotide biosynthesis pathway. The sequence is that of Aspartate carbamoyltransferase catalytic subunit from Nitratidesulfovibrio vulgaris (strain DSM 19637 / Miyazaki F) (Desulfovibrio vulgaris).